The chain runs to 440 residues: Chromosome partition protein MukF (440 aa).

Positions 208-236 are leucine-zipper; it reads LSETSGTLRELQDTLEAAGDKLQANLLRI.

This sequence belongs to the MukF family. Interacts, and probably forms a ternary complex, with MukE and MukB via its C-terminal region. The complex formation is stimulated by calcium or magnesium. It is required for an interaction between MukE and MukB.

It localises to the cytoplasm. Its subcellular location is the nucleoid. Involved in chromosome condensation, segregation and cell cycle progression. May participate in facilitating chromosome segregation by condensation DNA from both sides of a centrally located replisome during cell division. Not required for mini-F plasmid partitioning. Probably acts via its interaction with MukB and MukE. Overexpression results in anucleate cells. It has a calcium binding activity. This chain is Chromosome partition protein MukF, found in Escherichia coli (strain ATCC 8739 / DSM 1576 / NBRC 3972 / NCIMB 8545 / WDCM 00012 / Crooks).